The sequence spans 349 residues: Anthranilate phosphoribosyltransferase (349 aa).

Residues glycine 87, 90-91, threonine 95, 97-100, 115-123, and serine 127 contribute to the 5-phospho-alpha-D-ribose 1-diphosphate site; these read GD, NIST, and KHGNRSVSS. Residue glycine 87 participates in anthranilate binding. A Mg(2+)-binding site is contributed by serine 99. Asparagine 118 is a binding site for anthranilate. Arginine 173 lines the anthranilate pocket. Mg(2+)-binding residues include aspartate 231 and glutamate 232.

Belongs to the anthranilate phosphoribosyltransferase family. As to quaternary structure, homodimer. Mg(2+) is required as a cofactor.

It carries out the reaction N-(5-phospho-beta-D-ribosyl)anthranilate + diphosphate = 5-phospho-alpha-D-ribose 1-diphosphate + anthranilate. It participates in amino-acid biosynthesis; L-tryptophan biosynthesis; L-tryptophan from chorismate: step 2/5. In terms of biological role, catalyzes the transfer of the phosphoribosyl group of 5-phosphorylribose-1-pyrophosphate (PRPP) to anthranilate to yield N-(5'-phosphoribosyl)-anthranilate (PRA). This Shewanella loihica (strain ATCC BAA-1088 / PV-4) protein is Anthranilate phosphoribosyltransferase.